A 641-amino-acid chain; its full sequence is XK-related protein 6 (641 aa).

Disordered regions lie at residues 20-47 (LDEA…DGSE) and 84-120 (RSAA…PPPP). Residues 34 to 46 (PGGGGCGGGGDGS) are compositionally biased toward gly residues. A compositionally biased stretch (pro residues) spans 107-120 (PPTPSAARPEPPPP). 7 helical membrane-spanning segments follow: residues 130-150 (LWIV…LWLA), 159-179 (YVYF…VQSL), 318-338 (TLPC…LASY), 372-392 (VISF…FVVV), 413-433 (WEEI…WFNV), 442-462 (MFAY…LWYF), and 473-493 (AVPA…MMLL).

Belongs to the XK family.

The protein localises to the cell membrane. In Homo sapiens (Human), this protein is XK-related protein 6.